We begin with the raw amino-acid sequence, 197 residues long: Syndecan-4 (197 aa).

Residues 1–19 form the signal peptide; sequence MPLPRAAFLLGLLLAAAAA. Residues 20 to 147 are Extracellular-facing; sequence ESVRETETMD…SIFERTEVLT (128 aa). S38, S65, and S67 each carry an O-linked (Xyl...) (glycosaminoglycan) serine glycan. N-linked (GlcNAc...) asparagine glycosylation is found at N124 and N136. A helical membrane pass occupies residues 148–168; the sequence is ALIAGGAVGLLFAVFLILLLV. At 169–197 the chain is on the cytoplasmic side; the sequence is YRMKKKDEGSYDLGKKPIYKKAPTNEFYA.

Belongs to the syndecan proteoglycan family. Interacts with SDOS. O-glycosylated; contains both chondroitin sulfate and heparan sulfate. Ser-38, Ser-65 and Ser-67 can all be modified by either chondroitin sulfate or heparan sulfate, and the protein exists in forms that contain only chondroitin sulfate, only heparan sulfate and both chondroitin sulfate and heparan sulfate.

It localises to the membrane. Its function is as follows. Cell surface proteoglycan which regulates exosome biogenesis in concert with SDCBP and PDCD6IP. This Gallus gallus (Chicken) protein is Syndecan-4 (SDC4).